Consider the following 398-residue polypeptide: Nicotinate phosphoribosyltransferase (398 aa).

H221 bears the Phosphohistidine; by autocatalysis mark.

Belongs to the NAPRTase family. Post-translationally, transiently phosphorylated on a His residue during the reaction cycle. Phosphorylation strongly increases the affinity for substrates and increases the rate of nicotinate D-ribonucleotide production. Dephosphorylation regenerates the low-affinity form of the enzyme, leading to product release.

The catalysed reaction is nicotinate + 5-phospho-alpha-D-ribose 1-diphosphate + ATP + H2O = nicotinate beta-D-ribonucleotide + ADP + phosphate + diphosphate. The protein operates within cofactor biosynthesis; NAD(+) biosynthesis; nicotinate D-ribonucleotide from nicotinate: step 1/1. Catalyzes the synthesis of beta-nicotinate D-ribonucleotide from nicotinate and 5-phospho-D-ribose 1-phosphate at the expense of ATP. This chain is Nicotinate phosphoribosyltransferase, found in Buchnera aphidicola subsp. Schizaphis graminum (strain Sg).